A 199-amino-acid chain; its full sequence is N-(5'-phosphoribosyl)anthranilate isomerase (199 aa).

This sequence belongs to the TrpF family.

It catalyses the reaction N-(5-phospho-beta-D-ribosyl)anthranilate = 1-(2-carboxyphenylamino)-1-deoxy-D-ribulose 5-phosphate. It participates in amino-acid biosynthesis; L-tryptophan biosynthesis; L-tryptophan from chorismate: step 3/5. This Streptococcus pneumoniae (strain ATCC BAA-255 / R6) protein is N-(5'-phosphoribosyl)anthranilate isomerase.